Here is a 149-residue protein sequence, read N- to C-terminus: D-aminoacyl-tRNA deacylase (149 aa).

A Gly-cisPro motif, important for rejection of L-amino acids motif is present at residues 137-138 (GP).

Belongs to the DTD family. As to quaternary structure, homodimer.

It is found in the cytoplasm. The catalysed reaction is glycyl-tRNA(Ala) + H2O = tRNA(Ala) + glycine + H(+). It catalyses the reaction a D-aminoacyl-tRNA + H2O = a tRNA + a D-alpha-amino acid + H(+). In terms of biological role, an aminoacyl-tRNA editing enzyme that deacylates mischarged D-aminoacyl-tRNAs. Also deacylates mischarged glycyl-tRNA(Ala), protecting cells against glycine mischarging by AlaRS. Acts via tRNA-based rather than protein-based catalysis; rejects L-amino acids rather than detecting D-amino acids in the active site. By recycling D-aminoacyl-tRNA to D-amino acids and free tRNA molecules, this enzyme counteracts the toxicity associated with the formation of D-aminoacyl-tRNA entities in vivo and helps enforce protein L-homochirality. This chain is D-aminoacyl-tRNA deacylase, found in Desulforudis audaxviator (strain MP104C).